The primary structure comprises 2546 residues: Formin-J (2546 aa).

Disordered stretches follow at residues 1 to 40, 61 to 108, 188 to 270, 369 to 414, 502 to 541, 802 to 849, 879 to 898, 987 to 1101, 1485 to 1529, 1558 to 1601, 1659 to 1775, 1840 to 1869, and 2014 to 2033; these read MEENTNNIDNGHMGDNNNENNNNSNNNNNNNSNSSSSFVK, ENSN…PLSE, KNIT…PNSA, TTNN…SSSS, TNSFGSSTTTTISGGGSGSSSVNSSGGGSGTTPINVTPNS, SSIS…NTRK, TSVPTSPTSKNPLITSNNNN, TTNN…GGIG, PKSK…ASLS, KRSK…FKSP, INNI…KVNS, VPTTTTSTTTTTQTTPPPVTINEKEKETQS, and SNLSRKSSKSSNNSSTSSLE. Low complexity-rich tracts occupy residues 16-37 and 62-98; these read NNNENNNNSNNNNNNNSNSSSS and NSNNSITSGGSSSNSGEISSNNNNNNNNNGILKNSTS. Composition is skewed to polar residues over residues 99–108 and 188–198; these read GSKDNTPLSE and KNITPSKNNSP. Composition is skewed to low complexity over residues 203–237 and 247–270; these read NNNNNNNNNNNNNNNNNNNNNNNNNNNNNNNNNNN and NKNSIYNTNSNNNSNTTNSTPNSA. Polar residues predominate over residues 377–389; that stretch reads AESLTTYSESSEI. 2 stretches are compositionally biased toward low complexity: residues 390–414 and 502–513; these read STDSTGVCSSSSSTSSTLSSKSSSS and TNSFGSSTTTTI. Residues 391–444 enclose the FHA domain; sequence TDSTGVCSSSSSTSSTLSSKSSSSSSFNKFMEFLLIYIEDNDSTNGTWVNGNKL. A GBD/FH3 domain is found at 457–963; it reads KITLSTPDFS…SSISNEQEYQ (507 aa). Composition is skewed to polar residues over residues 879 to 891 and 992 to 1007; these read TSVPTSPTSKNPL and SSAKNIEVDSSVNKSP. Residues 1033 to 1042 are compositionally biased toward pro residues; it reads VPPPPPPPPG. A compositionally biased stretch (low complexity) spans 1043-1056; the sequence is GNNNNESDVPSSSG. Residues 1057–1097 show a composition bias toward pro residues; sequence GPPPPPPPPPPPGKSSGGGPPPPPPPPPKGGKGGPPPPPPI. An FH1 domain is found at 1072-1098; the sequence is SGGGPPPPPPPPPKGGKGGPPPPPPIG. An FH2 domain is found at 1106 to 1495; sequence KVKEEQPSVP…KSKKYQEQQN (390 aa). Residues 1492-1502 are compositionally biased toward polar residues; sequence EQQNKPTQNND. Residues 1507 to 1529 are compositionally biased toward low complexity; the sequence is SKLSNLPSSSSINDESSSSASLS. In terms of domain architecture, DAD spans 1563–1593; that stretch reads EQEPVVEPIQITPKVGSAASAEPSPSIKSRD. Over residues 1665 to 1679 the composition is skewed to low complexity; it reads SSSSSSSSSSSSSSS. The segment covering 1687–1717 has biased composition (basic and acidic residues); it reads HNTESEIKKEFISNSSMDKDKEKIKEKEKGT. Positions 1732-1745 are enriched in low complexity; the sequence is KSTTTSPSSSSSKK. Residues 1746–1757 show a composition bias toward polar residues; the sequence is QIPSLSECLQES. 2 stretches are compositionally biased toward low complexity: residues 1763-1775 and 1841-1853; these read RSSSYSPNSKVNS and PTTTTSTTTTTQT. Residues 2067–2118 are a coiled coil; that stretch reads IDDNQQKQQKQQQQQQQQQQQQQQLPQPQQQQQQQQQQQQQQQQQQQQQQQQ. A compositionally biased stretch (low complexity) spans 2121-2154; that stretch reads QQSTTTTTISTHHPQLKQVQPQSPSSLSQQPTQQ. Disordered stretches follow at residues 2121 to 2369, 2381 to 2473, and 2485 to 2510; these read QQST…PKTV, SHKK…SYSS, and SPSSSITSCKPSPGAVSSTSSTLKTP. Positions 2160 to 2179 are enriched in polar residues; that stretch reads QPSSPLQSHYKPQQKPQTTY. Composition is skewed to low complexity over residues 2188-2206 and 2237-2256; these read ANPFPSSTTSTNSSPSNAS and SSASSNSSSVSGSSQSTPLS. The span at 2274-2287 shows a compositional bias: polar residues; that stretch reads TPPSSSISNSTATT. The segment covering 2302-2315 has biased composition (low complexity); sequence SPSSSSLEQSSNAS. Residues 2332-2342 are compositionally biased toward basic residues; sequence FKKHKKSHSKS. Composition is skewed to low complexity over residues 2388-2439, 2459-2473, and 2485-2497; these read VDQS…SSSS, NISSGNISNNTSYSS, and SPSSSITSCKPSP. Residues 2499–2508 are compositionally biased toward polar residues; it reads AVSSTSSTLK.

The protein belongs to the formin homology family. Diaphanous subfamily. Interacts (via GBD/FH3 domain) with activated Rho-GTPases.

Functionally, formins play an important role in the nucleation of actin and the formation of linear actin filaments. In Dictyostelium discoideum (Social amoeba), this protein is Formin-J (forJ).